The sequence spans 212 residues: WAP four-disulfide core domain protein 1 (212 aa).

Residues 1–26 (MGSCDRKALWALSFLLLLLGSSSVQG) form the signal peptide. The tract at residues 43 to 62 (EEVAATGSRQPHADRCPPPP) is disordered. In terms of domain architecture, WAP spans 51-100 (RQPHADRCPPPPRTLPPGACQATRCQSDSECPRHRRCCYNGCAYACLEAV). Disulfide bonds link Cys58-Cys88, Cys70-Cys92, Cys75-Cys87, and Cys81-Cys96. Positions 191-212 (EYPEGDSKYVAEPGKGQQRHFP) are disordered.

In terms of tissue distribution, vascular smooth muscle and prostate. Periacinar ring.

Its subcellular location is the secreted. Its function is as follows. Has growth inhibitory activity. This is WAP four-disulfide core domain protein 1 (Wfdc1) from Rattus norvegicus (Rat).